The primary structure comprises 119 residues: V-type proton ATPase subunit F (119 aa).

It belongs to the V-ATPase F subunit family. In terms of assembly, V-ATPase is a heteromultimeric enzyme made up of two complexes: the ATP-hydrolytic V1 complex and the proton translocation V0 complex. The V1 complex consists of three catalytic AB heterodimers that form a heterohexamer, three peripheral stalks each consisting of EG heterodimers, one central rotor including subunits D and F, and the regulatory subunits C and H. The proton translocation complex V0 consists of the proton transport subunit a, a ring of proteolipid subunits c9c'', rotary subunit d, subunits e and f, and the accessory subunits ATP6AP1/Ac45 and ATP6AP2/PRR. Expressed in brain (at protein level).

The protein resides in the cytoplasmic vesicle. The protein localises to the secretory vesicle. It localises to the synaptic vesicle membrane. Its subcellular location is the clathrin-coated vesicle membrane. Its function is as follows. Subunit of the V1 complex of vacuolar(H+)-ATPase (V-ATPase), a multisubunit enzyme composed of a peripheral complex (V1) that hydrolyzes ATP and a membrane integral complex (V0) that translocates protons. V-ATPase is responsible for acidifying and maintaining the pH of intracellular compartments and in some cell types, is targeted to the plasma membrane, where it is responsible for acidifying the extracellular environment. The sequence is that of V-type proton ATPase subunit F (ATP6V1F) from Bos taurus (Bovine).